We begin with the raw amino-acid sequence, 223 residues long: Urease accessory protein UreF (223 aa).

The protein belongs to the UreF family. UreD, UreF and UreG form a complex that acts as a GTP-hydrolysis-dependent molecular chaperone, activating the urease apoprotein by helping to assemble the nickel containing metallocenter of UreC. The UreE protein probably delivers the nickel.

The protein resides in the cytoplasm. Functionally, required for maturation of urease via the functional incorporation of the urease nickel metallocenter. The polypeptide is Urease accessory protein UreF (Rhizobium leguminosarum bv. trifolii (strain WSM2304)).